The chain runs to 509 residues: Proto-oncogene tyrosine-protein kinase LCK (509 aa).

Glycine 2 carries the N-myristoyl glycine lipid modification. The interactions with CD4 and CD8 stretch occupies residues 2–72; the sequence is GCVCSSNPED…DNLVIALHSY (71 aa). Residues cysteine 3 and cysteine 5 are each lipidated (S-palmitoyl cysteine). An SH3 domain is found at 61-121; it reads LQDNLVIALH…PFNFVAKANS (61 aa). Lysine 99 participates in a covalent cross-link: Glycyl lysine isopeptide (Lys-Gly) (interchain with G-Cter in ubiquitin). Residue serine 102 is modified to Phosphoserine. An SH2 domain is found at 127–224; sequence WFFKNLSRKD…GLCTKLSRPC (98 aa). Residues 154 to 242 form an interaction with PTPRH region; sequence RESESTAGSF…WWEDEWEVPR (89 aa). Threonine 159 is subject to Phosphothreonine. A Phosphoserine modification is found at serine 162. Tyrosine 192 is subject to Phosphotyrosine. A Phosphoserine modification is found at serine 194. The Protein kinase domain occupies 245–498; that stretch reads LKLVERLGAG…YLRSVLDDFF (254 aa). ATP-binding positions include 251-259 and lysine 273; that span reads LGAGQFGEV. A Glycyl lysine isopeptide (Lys-Gly) (interchain with G-Cter in ubiquitin) cross-link involves residue lysine 276. The active-site Proton acceptor is the aspartate 364. A Phosphotyrosine; by autocatalysis modification is found at tyrosine 394. Phosphotyrosine is present on tyrosine 505.

The protein belongs to the protein kinase superfamily. Tyr protein kinase family. SRC subfamily. In terms of assembly, binds to the cytoplasmic domain of cell surface receptors, such as AXL, CD2, CD4, CD5, CD8, CD44, CD45 and CD122. Also binds to effector molecules, such as PI4K, VAV1, RASA1, FYB1 and to other protein kinases including CDK1, RAF1, ZAP70 and SYK. Binds to phosphatidylinositol 3'-kinase (PI3K) from T-lymphocytes through its SH3 domain and to the tyrosine phosphorylated form of KHDRBS1/p70 through its SH2 domain. Interacts with SQSTM1. Interacts with phosphorylated LIME1. Interacts with CBLB and PTPRH. Interacts with RUNX3. Forms a signaling complex with EPHA1, PTK2B and PI3-KINASE; upon activation by EFNA1 which may regulate T-lymphocytes migration. Associates with ZAP70 and RHOH; these interactions allow LCK-mediated RHOH and CD3 subunit phosphorylations in presence of a functional ZAP70. Interacts with CEACAM1 (via cytoplasmic domain); mediates CEACAM1 phosphorylation resulting in PTPN6 recruitment that dephosphorylates TCR stimulation-induced CD247 and ZAP70. Interacts with FYB2. Interacts with CD160. Interacts with CD48. Autophosphorylated on Tyr-394, increasing enzymatic activity, this site is dephosphorylated by PTN22. Phosphorylated on Tyr-505 by CSK, decreasing activity. Dephosphorylated by PTPRC/CD45. Dephosphorylation at Tyr-394 by PTPN2 negatively regulates T-cells differentiation. Dephosphorylation at Tyr-394 by DUSP22 negatively regulates T-cell receptor signaling. Post-translationally, myristoylation is required prior to palmitoylation. In terms of processing, palmitoylation regulates association with the plasma membrane and could be mediated by ZDHHC2. 'Lys-63'-linked ubiquitinated at Lys-99 and Lys-276 by UBR2; this modification is required for autophosphorylation at Tyr-394.

Its subcellular location is the cell membrane. The protein resides in the cytoplasm. The protein localises to the cytosol. The enzyme catalyses L-tyrosyl-[protein] + ATP = O-phospho-L-tyrosyl-[protein] + ADP + H(+). The relative activities of the inhibitory tyrosine-protein kinase CSK and the activating tyrosine-protein phosphatase PTPRC/CD45 determine the level of LCK activity. These interactions allow rapid and efficient activation of LCK in response to TCR stimulation. Non-receptor tyrosine-protein kinase that plays an essential role in the selection and maturation of developing T-cells in the thymus and in the function of mature T-cells. Plays a key role in T-cell antigen receptor (TCR)-linked signal transduction pathways. Constitutively associated with the cytoplasmic portions of the CD4 and CD8 surface receptors. Association of the TCR with a peptide antigen-bound MHC complex facilitates the interaction of CD4 and CD8 with MHC class II and class I molecules, respectively, thereby recruiting the associated LCK protein to the vicinity of the TCR/CD3 complex. LCK then phosphorylates tyrosine residues within the immunoreceptor tyrosine-based activation motifs (ITAM) of the cytoplasmic tails of the TCR-gamma chains and CD3 subunits, initiating the TCR/CD3 signaling pathway. Once stimulated, the TCR recruits the tyrosine kinase ZAP70, that becomes phosphorylated and activated by LCK. Following this, a large number of signaling molecules are recruited, ultimately leading to lymphokine production. LCK also contributes to signaling by other receptor molecules. Associates directly with the cytoplasmic tail of CD2, which leads to hyperphosphorylation and activation of LCK. Also plays a role in the IL2 receptor-linked signaling pathway that controls the T-cell proliferative response. Binding of IL2 to its receptor results in increased activity of LCK. Is expressed at all stages of thymocyte development and is required for the regulation of maturation events that are governed by both pre-TCR and mature alpha beta TCR. Phosphorylates other substrates including RUNX3, PTK2B/PYK2, the microtubule-associated protein MAPT, RHOH or TYROBP. Interacts with UNC119; this interaction plays a crucial role in activation of LCK. In Rattus norvegicus (Rat), this protein is Proto-oncogene tyrosine-protein kinase LCK (Lck).